Reading from the N-terminus, the 226-residue chain is Cytochrome c oxidase subunit 2 (226 aa).

Over 1-14 (MAYPLQLGLQDATS) the chain is Mitochondrial intermembrane. A helical transmembrane segment spans residues 15 to 45 (PIMEELTSFHDHTLMIVFLISTLVLYIISLM). Over 46-59 (LTTKLTHTSTMDAQ) the chain is Mitochondrial matrix. A helical transmembrane segment spans residues 60-87 (EIETIWTILPAIILIMIALPSLRVLYMM). Residues 88–226 (DEINNPALTV…KYFEAWSASM (139 aa)) are Mitochondrial intermembrane-facing. His161, Cys196, Glu198, Cys200, His204, and Met207 together coordinate Cu cation. Glu198 provides a ligand contact to Mg(2+). At Tyr218 the chain carries Phosphotyrosine.

It belongs to the cytochrome c oxidase subunit 2 family. As to quaternary structure, component of the cytochrome c oxidase (complex IV, CIV), a multisubunit enzyme composed of 14 subunits. The complex is composed of a catalytic core of 3 subunits MT-CO1, MT-CO2 and MT-CO3, encoded in the mitochondrial DNA, and 11 supernumerary subunits COX4I, COX5A, COX5B, COX6A, COX6B, COX6C, COX7A, COX7B, COX7C, COX8 and NDUFA4, which are encoded in the nuclear genome. The complex exists as a monomer or a dimer and forms supercomplexes (SCs) in the inner mitochondrial membrane with NADH-ubiquinone oxidoreductase (complex I, CI) and ubiquinol-cytochrome c oxidoreductase (cytochrome b-c1 complex, complex III, CIII), resulting in different assemblies (supercomplex SCI(1)III(2)IV(1) and megacomplex MCI(2)III(2)IV(2)). Found in a complex with TMEM177, COA6, COX18, COX20, SCO1 and SCO2. Interacts with TMEM177 in a COX20-dependent manner. Interacts with COX20. Interacts with COX16. Cu cation serves as cofactor.

Its subcellular location is the mitochondrion inner membrane. It carries out the reaction 4 Fe(II)-[cytochrome c] + O2 + 8 H(+)(in) = 4 Fe(III)-[cytochrome c] + 2 H2O + 4 H(+)(out). Component of the cytochrome c oxidase, the last enzyme in the mitochondrial electron transport chain which drives oxidative phosphorylation. The respiratory chain contains 3 multisubunit complexes succinate dehydrogenase (complex II, CII), ubiquinol-cytochrome c oxidoreductase (cytochrome b-c1 complex, complex III, CIII) and cytochrome c oxidase (complex IV, CIV), that cooperate to transfer electrons derived from NADH and succinate to molecular oxygen, creating an electrochemical gradient over the inner membrane that drives transmembrane transport and the ATP synthase. Cytochrome c oxidase is the component of the respiratory chain that catalyzes the reduction of oxygen to water. Electrons originating from reduced cytochrome c in the intermembrane space (IMS) are transferred via the dinuclear copper A center (CU(A)) of subunit 2 and heme A of subunit 1 to the active site in subunit 1, a binuclear center (BNC) formed by heme A3 and copper B (CU(B)). The BNC reduces molecular oxygen to 2 water molecules using 4 electrons from cytochrome c in the IMS and 4 protons from the mitochondrial matrix. The polypeptide is Cytochrome c oxidase subunit 2 (MT-CO2) (Perognathus flavus (Silky pocket mouse)).